The following is a 464-amino-acid chain: Glutamate--tRNA ligase (464 aa).

The 'HIGH' region motif lies at 9–19 (PSPTGYLHIGG). A 'KMSKS' region motif is present at residues 242–246 (KISKR). An ATP-binding site is contributed by Lys-245.

Belongs to the class-I aminoacyl-tRNA synthetase family. Glutamate--tRNA ligase type 1 subfamily. Monomer.

The protein resides in the cytoplasm. It catalyses the reaction tRNA(Glu) + L-glutamate + ATP = L-glutamyl-tRNA(Glu) + AMP + diphosphate. Functionally, catalyzes the attachment of glutamate to tRNA(Glu) in a two-step reaction: glutamate is first activated by ATP to form Glu-AMP and then transferred to the acceptor end of tRNA(Glu). The protein is Glutamate--tRNA ligase of Neisseria meningitidis serogroup B (strain ATCC BAA-335 / MC58).